We begin with the raw amino-acid sequence, 63 residues long: uncharacterized protein (63 aa).

The helical transmembrane segment at 3–23 (IIYIILGFLSLAIGIIGIFPS) threads the bilayer.

It localises to the membrane. This is an uncharacterized protein from Haemophilus influenzae (strain ATCC 51907 / DSM 11121 / KW20 / Rd).